The primary structure comprises 262 residues: Type II pantothenate kinase (262 aa).

ATP is bound at residue 7-14; that stretch reads DAGGSLVK. Glutamate 71 serves as the catalytic Proton acceptor. ATP contacts are provided by residues threonine 101, 119–123, and tyrosine 135; that span reads GGLLT.

Belongs to the type II pantothenate kinase family. Homodimer.

The protein resides in the cytoplasm. It carries out the reaction (R)-pantothenate + ATP = (R)-4'-phosphopantothenate + ADP + H(+). The protein operates within cofactor biosynthesis; coenzyme A biosynthesis; CoA from (R)-pantothenate: step 1/5. In terms of biological role, catalyzes the phosphorylation of pantothenate (Pan), the first step in CoA biosynthesis. The chain is Type II pantothenate kinase from Oceanobacillus iheyensis (strain DSM 14371 / CIP 107618 / JCM 11309 / KCTC 3954 / HTE831).